The primary structure comprises 101 residues: Small ribosomal subunit protein uS14 (101 aa).

This sequence belongs to the universal ribosomal protein uS14 family. Part of the 30S ribosomal subunit. Contacts proteins S3 and S10.

In terms of biological role, binds 16S rRNA, required for the assembly of 30S particles and may also be responsible for determining the conformation of the 16S rRNA at the A site. The polypeptide is Small ribosomal subunit protein uS14 (Haemophilus ducreyi (strain 35000HP / ATCC 700724)).